The chain runs to 303 residues: Ribosomal RNA small subunit methyltransferase A (303 aa).

Low complexity predominate over residues M1–S19. Positions M1 to L34 are disordered. Residues H55, L57, G82, E104, D130, and N149 each coordinate S-adenosyl-L-methionine.

This sequence belongs to the class I-like SAM-binding methyltransferase superfamily. rRNA adenine N(6)-methyltransferase family. RsmA subfamily.

The protein localises to the cytoplasm. It catalyses the reaction adenosine(1518)/adenosine(1519) in 16S rRNA + 4 S-adenosyl-L-methionine = N(6)-dimethyladenosine(1518)/N(6)-dimethyladenosine(1519) in 16S rRNA + 4 S-adenosyl-L-homocysteine + 4 H(+). Its function is as follows. Specifically dimethylates two adjacent adenosines (A1518 and A1519) in the loop of a conserved hairpin near the 3'-end of 16S rRNA in the 30S particle. May play a critical role in biogenesis of 30S subunits. The chain is Ribosomal RNA small subunit methyltransferase A from Gluconobacter oxydans (strain 621H) (Gluconobacter suboxydans).